We begin with the raw amino-acid sequence, 434 residues long: Trigger factor (434 aa).

Residues 160–245 (GDKAKINFVG…LNEVQAANLP (86 aa)) enclose the PPIase FKBP-type domain.

The protein belongs to the FKBP-type PPIase family. Tig subfamily.

The protein localises to the cytoplasm. It carries out the reaction [protein]-peptidylproline (omega=180) = [protein]-peptidylproline (omega=0). Involved in protein export. Acts as a chaperone by maintaining the newly synthesized protein in an open conformation. Functions as a peptidyl-prolyl cis-trans isomerase. The protein is Trigger factor of Shewanella woodyi (strain ATCC 51908 / MS32).